The following is a 129-amino-acid chain: D-ribose pyranase (129 aa).

His20 (proton donor) is an active-site residue. Residues Asp28, His96, and 118-120 contribute to the substrate site; that span reads YAN.

It belongs to the RbsD / FucU family. RbsD subfamily. Homodecamer.

The protein resides in the cytoplasm. The enzyme catalyses beta-D-ribopyranose = beta-D-ribofuranose. The protein operates within carbohydrate metabolism; D-ribose degradation; D-ribose 5-phosphate from beta-D-ribopyranose: step 1/2. Its function is as follows. Catalyzes the interconversion of beta-pyran and beta-furan forms of D-ribose. The polypeptide is D-ribose pyranase (Shouchella clausii (strain KSM-K16) (Alkalihalobacillus clausii)).